We begin with the raw amino-acid sequence, 274 residues long: MGPELGWGHPRGGDVCSSDSFNEDNTAFAKQVRSERPFFSSNPELDNLMIQAIQVLRFHLLELEKGKMPIDLVIEDRDGGCREDFEDYPASCPSLPDQNNIWIRDHEDSGSVHLGTPGPSSGGLASQSGDNSSDQGVGLDTSVASPSSGGEDEDLDQEPRRNKKRGIFPKVATNIMRAWLFQHLSHPYPSEEQKKQLAQDTGLTILQVNNWFINARRRIVQPMIDQSNRTGQGAAFSPEGQPIGGYTETEPHVAFRAPASVGMSLNSEGEWHYL.

The MEIS N-terminal domain maps to 12-65; the sequence is GGDVCSSDSFNEDNTAFAKQVRSERPFFSSNPELDNLMIQAIQVLRFHLLELEK. Disordered regions lie at residues 108-167 and 228-248; these read DSGS…KRGI and NRTG…GYTE. The segment covering 123–135 has biased composition (polar residues); that stretch reads GLASQSGDNSSDQ. A DNA-binding region (homeobox) is located at residues 161-223; that stretch reads RNKKRGIFPK…NARRRIVQPM (63 aa).

Belongs to the TALE/MEIS homeobox family.

The protein resides in the nucleus. The chain is Putative homeobox protein Meis3-like 1 (MEIS3P1) from Homo sapiens (Human).